A 135-amino-acid polypeptide reads, in one-letter code: Protein PilG (135 aa).

The Response regulatory domain maps to 9–125 (KVMVIDDSKT…ELLGAIKAHV (117 aa)). 4-aspartylphosphate is present on D58.

In terms of processing, phosphorylated.

Its function is as follows. Plays an essential role in both cAMP-dependent and independent regulation of twitching motility. Regulates the cAMP-independent coordination of type IV pilus (T4P) biogenesis and retraction that plays a role in surface and host cell adhesion, colonization, biofilm maturation, virulence, and twitching. In addition, phosphorylated PilG is necessary for cAMP production via regulation of the adenylate cyclase CyaB. Acts therefore as a response regulator of the chemosensory system/Chp system. In Pseudomonas aeruginosa (strain ATCC 15692 / DSM 22644 / CIP 104116 / JCM 14847 / LMG 12228 / 1C / PRS 101 / PAO1), this protein is Protein PilG (pilG).